Consider the following 496-residue polypeptide: Probable cytosol aminopeptidase (496 aa).

Mn(2+) contacts are provided by Lys-266 and Asp-271. Lys-278 is an active-site residue. The Mn(2+) site is built by Asp-289, Asp-348, and Glu-350. Arg-352 is an active-site residue.

This sequence belongs to the peptidase M17 family. Requires Mn(2+) as cofactor.

Its subcellular location is the cytoplasm. It carries out the reaction Release of an N-terminal amino acid, Xaa-|-Yaa-, in which Xaa is preferably Leu, but may be other amino acids including Pro although not Arg or Lys, and Yaa may be Pro. Amino acid amides and methyl esters are also readily hydrolyzed, but rates on arylamides are exceedingly low.. The catalysed reaction is Release of an N-terminal amino acid, preferentially leucine, but not glutamic or aspartic acids.. Its function is as follows. Presumably involved in the processing and regular turnover of intracellular proteins. Catalyzes the removal of unsubstituted N-terminal amino acids from various peptides. The chain is Probable cytosol aminopeptidase from Pseudomonas fluorescens (strain Pf0-1).